The following is a 207-amino-acid chain: MRLIRMLLLPVLAVTTLSAHADPKDVARLTQLLEKSQTLTARFSQLTLDGSGTQLQETAGEMSLQRPGLFYWHTDAPQEQLMVSDGQKVSLWDPDLEQVTIKKLDQRLTQTPALLLSGDVSKISESFDITSKEAGGVMDFTLKPKTRDTLFDSLRLSFRNGMINDMQLIDSVGQRTNILFTGVKANEAIPASKFKFDIPKGADVIQE.

Positions 1 to 21 are cleaved as a signal peptide; the sequence is MRLIRMLLLPVLAVTTLSAHA.

It belongs to the LolA family. As to quaternary structure, monomer.

The protein resides in the periplasm. Functionally, participates in the translocation of lipoproteins from the inner membrane to the outer membrane. Only forms a complex with a lipoprotein if the residue after the N-terminal Cys is not an aspartate (The Asp acts as a targeting signal to indicate that the lipoprotein should stay in the inner membrane). The protein is Outer-membrane lipoprotein carrier protein of Pseudomonas fluorescens (strain ATCC BAA-477 / NRRL B-23932 / Pf-5).